The sequence spans 35 residues: GGCRYFLGGCSEHSDCCEHLRCKMGLNYCAWDGTF.

3 cysteine pairs are disulfide-bonded: cysteine 3-cysteine 17, cysteine 10-cysteine 22, and cysteine 16-cysteine 29. The residue at position 35 (phenylalanine 35) is a Phenylalanine amide.

The protein belongs to the neurotoxin 10 (Hwtx-1) family. 62 (Vatx) subfamily. As to expression, expressed by the venom gland.

Its subcellular location is the secreted. Gating-modifier toxin with weak activity on Nav1.7/SCN9A and Nav1.8/SCN10A. Inhibits Nav1.7/SCN9A peak current (IC(50)=334 nM) and shifts the voltage dependence of activation to more depolarised membrane potentials. Shows 21% peak current inhibition (at 10 uM) on Nav1.8/SCN10A sodium channels. This Poecilotheria metallica (Metallic blue ornamental tree spider) protein is Mu-theraphotoxin-Pm1a.